The chain runs to 146 residues: Neuropeptide Y receptor type 2 (146 aa).

Residues 1–8 (KMGPVLCH) lie on the Extracellular side of the membrane. Residues cysteine 7 and cysteine 87 are joined by a disulfide bond. The helical transmembrane segment at 9 to 29 (LVPYAQGLAVQVSTITLTVIA) threads the bilayer. Topologically, residues 30–49 (LDRHRCIVYHLESKISKQIS) are cytoplasmic. Residues 50–70 (FLIIGLAWGVSALLASPLAIF) form a helical membrane-spanning segment. At 71-100 (REYSLIEIIPDFEIVACTEKWPGEEKGIYG) the chain is on the extracellular side. Residues 101-121 (TVYSLLSLLILYVLPLGIISF) traverse the membrane as a helical segment. Topologically, residues 122-146 (SYARIWSKLKNHVSPGAAHDHYHQR) are cytoplasmic.

It belongs to the G-protein coupled receptor 1 family.

It localises to the cell membrane. Its function is as follows. Receptor for neuropeptide Y and peptide YY. This chain is Neuropeptide Y receptor type 2 (NPY2R), found in Ovis aries (Sheep).